A 1202-amino-acid chain; its full sequence is Inner capsid protein VP3 (1202 aa).

Disordered stretches follow at residues 1–45 (MRPI…SGKI) and 73–99 (YTSK…PRVT). Positions 10 to 21 (NQERTTTKHQET) are enriched in basic and acidic residues. Over residues 27–45 (NEQTTSDQRFTRSSNSGKI) the composition is skewed to polar residues.

The protein belongs to the turreted BTV-fold inner capsid family. In terms of assembly, homodecamer; each decamer is made up of two conformers of VP2, called VP2A and VP2B. 12 homodecamers assemble to form an icosahedral capsid.

The protein resides in the virion. Functionally, inner capsid protein that self-assembles to form an icosahedral capsid with a T=2 symmetry, which consists of 120 copies of VP2, with channels at each of its five-fold vertices. This capsid constitutes the innermost concentric layer of the viral mature particle. The chain is Inner capsid protein VP3 (S3) from Aedes pseudoscutellaris reovirus (isolate France) (ApRV).